A 775-amino-acid chain; its full sequence is Glutamine--tRNA ligase (775 aa).

Ala2 carries the post-translational modification N-acetylalanine. Residue Ser70 is modified to Phosphoserine. The short motif at 270-280 (PEPNGILHIGH) is the 'HIGH' region element. Residues 271 to 273 (EPN) and 277 to 283 (HIGHAKA) contribute to the ATP site. L-glutamine is bound at residue Asp303. The residue at position 309 (Lys309) is an N6-acetyllysine. An L-glutamine-binding site is contributed by Tyr438. Residues Thr457, 486–487 (RL), and 494–496 (VSK) each bind ATP. Residues 493–497 (VVSKR) carry the 'KMSKS' region motif. Ser495 carries the phosphoserine modification.

This sequence belongs to the class-I aminoacyl-tRNA synthetase family. Monomer. Part of a multisubunit complex that groups tRNA ligases for Arg (RARS1), Asp (DARS1), Gln (QARS1), Ile (IARS1), Leu (LARS1), Lys (KARS1), Met (MARS1) the bifunctional ligase for Glu and Pro (EPRS1) and the auxiliary subunits AIMP1/p43, AIMP2/p38 and EEF1E1/p18. Interacts with RARS1. Part of a complex composed of RARS1, QARS1 and AIMP1.

Its subcellular location is the cytoplasm. It localises to the cytosol. It carries out the reaction tRNA(Gln) + L-glutamine + ATP = L-glutaminyl-tRNA(Gln) + AMP + diphosphate. In terms of biological role, glutamine--tRNA ligase. Plays a critical role in brain development. The chain is Glutamine--tRNA ligase (QARS1) from Bos taurus (Bovine).